We begin with the raw amino-acid sequence, 474 residues long: Adenylyl cyclase-associated protein 1 (474 aa).

Ala-2 is modified (N-acetylalanine). The residue at position 31 (Tyr-31) is a Phosphotyrosine. At Ser-34 the chain carries Phosphoserine. Position 80 is an N6-acetyllysine (Lys-80). 2 disordered regions span residues Glu-215–Arg-253 and Met-277–Lys-316. The segment covering Ser-217–Ser-227 has biased composition (low complexity). The span at Gly-228–Ile-241 shows a compositional bias: pro residues. Lys-286 is modified (N6-methyllysine). Ser-289, Ser-294, and Ser-300 each carry phosphoserine. Positions Phe-299–Lys-311 are enriched in pro residues. The residue at position 306 (Thr-306) is a Phosphothreonine. Phosphoserine occurs at positions 307 and 309. One can recognise a C-CAP/cofactor C-like domain in the interval Pro-312–Val-452. Residue Lys-347 forms a Glycyl lysine isopeptide (Lys-Gly) (interchain with G-Cter in SUMO1) linkage.

This sequence belongs to the CAP family. Homodimer. Binds actin monomers. Ubiquitous.

It is found in the cell membrane. In terms of biological role, directly regulates filament dynamics and has been implicated in a number of complex developmental and morphological processes, including mRNA localization and the establishment of cell polarity. The sequence is that of Adenylyl cyclase-associated protein 1 (Cap1) from Mus musculus (Mouse).